A 343-amino-acid polypeptide reads, in one-letter code: Serine/threonine-protein kinase SRK2C (343 aa).

One can recognise a Protein kinase domain in the interval 4–260; sequence YEIVKDIGSG…IEEIKNHSWF (257 aa). ATP contacts are provided by residues 10 to 18 and K33; that span reads IGSGNFGVA. D123 acts as the Proton acceptor in catalysis. At T158 the chain carries Phosphothreonine.

The protein belongs to the protein kinase superfamily. Ser/Thr protein kinase family. In terms of assembly, interacts with I-2 and TOPP1. As to expression, expressed in seedlings.

It carries out the reaction L-seryl-[protein] + ATP = O-phospho-L-seryl-[protein] + ADP + H(+). The enzyme catalyses L-threonyl-[protein] + ATP = O-phospho-L-threonyl-[protein] + ADP + H(+). Involved in gene regulation and confers tolerance to drought and osmotic stress. The polypeptide is Serine/threonine-protein kinase SRK2C (SRK2C) (Arabidopsis thaliana (Mouse-ear cress)).